We begin with the raw amino-acid sequence, 447 residues long: Serine/threonine-protein phosphatase 2A 55 kDa regulatory subunit B alpha isoform (447 aa).

Alanine 2 is subject to N-acetylalanine. WD repeat units follow at residues 11–80, 94–174, 175–218, 227–270, 288–325, 347–381, and 414–446; these read QWCF…FQSH, EKIN…IFAN, AHTY…VDIK, EVIT…KLFE, ISDV…TYQV, ECCW…TLEA, and DFNK…QDKV.

It belongs to the phosphatase 2A regulatory subunit B family. In terms of assembly, PP2A consists of a common heterodimeric core enzyme, composed of a 36 kDa catalytic subunit (subunit C) and a 65 kDa constant regulatory subunit (PR65 or subunit A), that associates with a variety of regulatory subunits. Proteins that associate with the core dimer include three families of regulatory subunits B (the R2/B/PR55/B55, R3/B''/PR72/PR130/PR59 and R5/B'/B56 families), the 48 kDa variable regulatory subunit, viral proteins, and cell signaling molecules. Interacts with the PP2A C catalytic subunit PPP2CA. Interacts with the PP2A A subunit PPP2R1A. Interacts with TP53. Interacts with IER5. Interacts with MFHAS1; the interaction is direct. Interacts with PABIR1/FAM122A (via its N-terminus); the interaction is direct and inhibits PP2A activity. Interacts with ARPP19; the interaction is direct and inhibits PP2A activity. Interacts with CRTC3. In terms of tissue distribution, expressed in all tissues examined.

Functionally, substrate-recognition subunit of protein phosphatase 2A (PP2A) that plays a key role in cell cycle by controlling mitosis entry and exit. Involved in chromosome clustering during late mitosis by mediating dephosphorylation of MKI67. Essential for serine/threonine-protein phosphatase 2A-mediated dephosphorylation of WEE1, preventing its ubiquitin-mediated proteolysis, increasing WEE1 protein levels, and promoting the G2/M checkpoint. The protein is Serine/threonine-protein phosphatase 2A 55 kDa regulatory subunit B alpha isoform (PPP2R2A) of Homo sapiens (Human).